We begin with the raw amino-acid sequence, 181 residues long: Large ribosomal subunit protein uL5 (181 aa).

The protein belongs to the universal ribosomal protein uL5 family. Part of the 50S ribosomal subunit; part of the 5S rRNA/L5/L18/L25 subcomplex. Contacts the 5S rRNA and the P site tRNA. Forms a bridge to the 30S subunit in the 70S ribosome.

This is one of the proteins that bind and probably mediate the attachment of the 5S RNA into the large ribosomal subunit, where it forms part of the central protuberance. In the 70S ribosome it contacts protein S13 of the 30S subunit (bridge B1b), connecting the 2 subunits; this bridge is implicated in subunit movement. Contacts the P site tRNA; the 5S rRNA and some of its associated proteins might help stabilize positioning of ribosome-bound tRNAs. This is Large ribosomal subunit protein uL5 from Thermosipho africanus (strain TCF52B).